Here is a 225-residue protein sequence, read N- to C-terminus: NAD(P)H-quinone oxidoreductase subunit K, chloroplastic (225 aa).

[4Fe-4S] cluster-binding residues include C43, C44, C108, and C139.

It belongs to the complex I 20 kDa subunit family. NDH is composed of at least 16 different subunits, 5 of which are encoded in the nucleus. The cofactor is [4Fe-4S] cluster.

The protein resides in the plastid. It is found in the chloroplast thylakoid membrane. It carries out the reaction a plastoquinone + NADH + (n+1) H(+)(in) = a plastoquinol + NAD(+) + n H(+)(out). The enzyme catalyses a plastoquinone + NADPH + (n+1) H(+)(in) = a plastoquinol + NADP(+) + n H(+)(out). Functionally, NDH shuttles electrons from NAD(P)H:plastoquinone, via FMN and iron-sulfur (Fe-S) centers, to quinones in the photosynthetic chain and possibly in a chloroplast respiratory chain. The immediate electron acceptor for the enzyme in this species is believed to be plastoquinone. Couples the redox reaction to proton translocation, and thus conserves the redox energy in a proton gradient. The chain is NAD(P)H-quinone oxidoreductase subunit K, chloroplastic from Lepidium virginicum (Virginia pepperweed).